Reading from the N-terminus, the 265-residue chain is Hydroxyethylthiazole kinase (265 aa).

Met-43 serves as a coordination point for substrate. Lys-118 and Thr-165 together coordinate ATP. Residue Gly-192 participates in substrate binding.

Belongs to the Thz kinase family. Mg(2+) is required as a cofactor.

The enzyme catalyses 5-(2-hydroxyethyl)-4-methylthiazole + ATP = 4-methyl-5-(2-phosphooxyethyl)-thiazole + ADP + H(+). Its pathway is cofactor biosynthesis; thiamine diphosphate biosynthesis; 4-methyl-5-(2-phosphoethyl)-thiazole from 5-(2-hydroxyethyl)-4-methylthiazole: step 1/1. Functionally, catalyzes the phosphorylation of the hydroxyl group of 4-methyl-5-beta-hydroxyethylthiazole (THZ). The protein is Hydroxyethylthiazole kinase of Pyrococcus horikoshii (strain ATCC 700860 / DSM 12428 / JCM 9974 / NBRC 100139 / OT-3).